We begin with the raw amino-acid sequence, 512 residues long: Pantothenate transporter FEN2 (512 aa).

Residues 1–27 are Cytoplasmic-facing; the sequence is MMKESKSITQHEVERESVSSKRAIKKR. A helical transmembrane segment spans residues 28–48; that stretch reads LLLFKIDLFVLSFVCLQYWIN. Over 49 to 79 the chain is Extracellular; sequence YVDRVGFTNAYISGMKEDLKMVGNDLTVSNT. A helical membrane pass occupies residues 80-100; it reads VFMIGYIVGMVPNNLMLLCVP. Topologically, residues 101–102 are cytoplasmic; it reads PR. Residues 103–123 traverse the membrane as a helical segment; sequence IWLSFCTFAWGLLTLGMYKVT. Residues 124-132 lie on the Extracellular side of the membrane; the sequence is SFKHICAIR. The helical transmembrane segment at 133–153 threads the bilayer; the sequence is FFQALFESCTFSGTHFVLGSW. At 154–164 the chain is on the cytoplasmic side; it reads YKEDELPIRSA. Residues 165-185 form a helical membrane-spanning segment; sequence IFTGSGLVGSMFSGFMQTSIF. The Extracellular segment spans residues 186 to 198; it reads THLNGRNGLAGWR. Residues 199-219 traverse the membrane as a helical segment; the sequence is WLFIIDFCITLPIAIYGFIFF. The Cytoplasmic portion of the chain corresponds to 220–271; that stretch reads PGLPDQTSAVSKFSMTRYIFNEQELHYARRRLPARDESTRLDWSTIPRVLKR. A helical membrane pass occupies residues 272 to 292; sequence WHWWMFSLVWVLGGENLGFAS. The Extracellular segment spans residues 293-312; it reads NSTFALWLQNQKYTLAQRNN. The helical transmembrane segment at 313 to 333 threads the bilayer; that stretch reads YPSGIFAVGIVSTLCSAVYMS. At 334–342 the chain is on the cytoplasmic side; sequence KIPRARHWH. Residues 343–363 traverse the membrane as a helical segment; it reads VSVFISLVMVIVAVLIRADPL. At 364 to 372 the chain is on the extracellular side; the sequence is NPKVVFSAQ. Residues 373 to 393 traverse the membrane as a helical segment; the sequence is YLGGVAYAGQAVFFSWANIIC. Residues 394 to 401 lie on the Cytoplasmic side of the membrane; that stretch reads HADLQERA. Residues 402-422 traverse the membrane as a helical segment; the sequence is IVLASMNMFSGAVNAWWSILF. At 423–434 the chain is on the extracellular side; it reads FASDMVPKFERG. A helical transmembrane segment spans residues 435 to 455; that stretch reads CYALLATAISSGIVSVVIRSL. Topologically, residues 456 to 512 are cytoplasmic; sequence QIKENLSKKQVPYIDANDMPGEDDDDDNQDNENDGDDESMEVELHNEEMAEISNPFR. Residues 468–512 form a disordered region; sequence YIDANDMPGEDDDDDNQDNENDGDDESMEVELHNEEMAEISNPFR. A compositionally biased stretch (acidic residues) spans 475–496; the sequence is PGEDDDDDNQDNENDGDDESME.

Belongs to the major facilitator superfamily. Allantoate permease family.

The protein localises to the cell membrane. Transports pantothenate into the cell. Also involved in the catabolite repression-mediated regulation of ergosterol biosynthesis and in fenpropimorph resistance. The polypeptide is Pantothenate transporter FEN2 (FEN2) (Saccharomyces cerevisiae (strain ATCC 204508 / S288c) (Baker's yeast)).